The chain runs to 64 residues: UPF0434 protein Bcep18194_A5877 (64 aa).

This sequence belongs to the UPF0434 family.

The polypeptide is UPF0434 protein Bcep18194_A5877 (Burkholderia lata (strain ATCC 17760 / DSM 23089 / LMG 22485 / NCIMB 9086 / R18194 / 383)).